Here is a 58-residue protein sequence, read N- to C-terminus: Small ribosomal subunit protein bS21 (58 aa).

Positions 27–58 (GVLSEARKHEHYEKPSVKRKKKSEAARKRKFK) are disordered. The span at 31-42 (EARKHEHYEKPS) shows a compositional bias: basic and acidic residues. Over residues 43–58 (VKRKKKSEAARKRKFK) the composition is skewed to basic residues.

This sequence belongs to the bacterial ribosomal protein bS21 family.

In Desulfitobacterium hafniense (strain DSM 10664 / DCB-2), this protein is Small ribosomal subunit protein bS21.